The primary structure comprises 417 residues: Candidapepsin-4 (417 aa).

Residues 1–18 (MFLQNILSVLAFALLIDA) form the signal peptide. Positions 19 to 75 (APVKRSTGFVTLDFNVKRSLVDPKDPTVEVKRSPLFLDIEPTEIPVDDTGRNDVGKR) are cleaved as a propeptide — activation peptide. A Peptidase A1 domain is found at 89–403 (YSADITIGSN…DLDDRKISMA (315 aa)). Asp-107 is a catalytic residue. Cys-122 and Cys-134 are joined by a disulfide. Asn-137 is a glycosylation site (N-linked (GlcNAc...) asparagine). Residue Asp-293 is part of the active site. An intrachain disulfide couples Cys-331 to Cys-369.

This sequence belongs to the peptidase A1 family. O-glycosylated.

Its subcellular location is the secreted. It catalyses the reaction Preferential cleavage at the carboxyl of hydrophobic amino acids, but fails to cleave 15-Leu-|-Tyr-16, 16-Tyr-|-Leu-17 and 24-Phe-|-Phe-25 of insulin B chain. Activates trypsinogen, and degrades keratin.. This is Candidapepsin-4 (SAP4) from Candida albicans (strain WO-1) (Yeast).